The following is a 344-amino-acid chain: MIKVGIIGATGYVGVELLRLLLNHSQIEIGAISSVSFDGQELDSIYKNFLGRTNLICTNMNEVIEKNDVIFTALPPGLSEDIATKIIENNKICIDMGADFRLSNEEEYKYWYGKNFSHPKLHKQSIYGLPELNKEKIRKSSLIANPGCYPTSIELGLIPLLKNLLIKPNGIICDSKSGTTGSGRSLSLNTHFPEENENFTPYKIGEHRHTPEIEEILSNIANTKVTITFTPHLLPINRGIISTIYCTPKEKIDLNSIHKIYTDFYKDKEFVNVLPLGDIASIKNVKLSNNCHISLHLNHRKDQIIIISAIDNMIKGAAGQAIQNMNIILGFKENEGLNLISPAF.

C148 is an active-site residue.

Belongs to the NAGSA dehydrogenase family. Type 1 subfamily.

Its subcellular location is the cytoplasm. The enzyme catalyses N-acetyl-L-glutamate 5-semialdehyde + phosphate + NADP(+) = N-acetyl-L-glutamyl 5-phosphate + NADPH + H(+). It participates in amino-acid biosynthesis; L-arginine biosynthesis; N(2)-acetyl-L-ornithine from L-glutamate: step 3/4. Its function is as follows. Catalyzes the NADPH-dependent reduction of N-acetyl-5-glutamyl phosphate to yield N-acetyl-L-glutamate 5-semialdehyde. This Clostridium botulinum (strain Alaska E43 / Type E3) protein is N-acetyl-gamma-glutamyl-phosphate reductase.